The primary structure comprises 376 residues: Sterol 24-C-methyltransferase (376 aa).

Belongs to the class I-like SAM-binding methyltransferase superfamily. Erg6/SMT family.

The catalysed reaction is zymosterol + S-adenosyl-L-methionine = fecosterol + S-adenosyl-L-homocysteine + H(+). It functions in the pathway steroid metabolism; ergosterol biosynthesis; ergosterol from zymosterol: step 1/5. Substrate analogs 25-azalanosterol and 24(R,S),25-epiminolanosterol act as inhibitors. Its function is as follows. Sterol 24-C-methyltransferase; part of the third module of ergosterol biosynthesis pathway that includes the late steps of the pathway. ERG6 catalyzes the methyl transfer from S-adenosyl-methionine to the C-24 of zymosterol to form fecosterol. The third module or late pathway involves the ergosterol synthesis itself through consecutive reactions that mainly occur in the endoplasmic reticulum (ER) membrane. Firstly, the squalene synthase ERG9 catalyzes the condensation of 2 farnesyl pyrophosphate moieties to form squalene, which is the precursor of all steroids. Squalene synthase is crucial for balancing the incorporation of farnesyl diphosphate (FPP) into sterol and nonsterol isoprene synthesis. Secondly, the squalene epoxidase ERG1 catalyzes the stereospecific oxidation of squalene to (S)-2,3-epoxysqualene, which is considered to be a rate-limiting enzyme in steroid biosynthesis. Then, the lanosterol synthase ERG7 catalyzes the cyclization of (S)-2,3 oxidosqualene to lanosterol, a reaction that forms the sterol core. In the next steps, lanosterol is transformed to zymosterol through a complex process involving various demethylation, reduction and desaturation reactions. The lanosterol 14-alpha-demethylase ERG11 (also known as CYP51) catalyzes C14-demethylation of lanosterol to produce 4,4'-dimethyl cholesta-8,14,24-triene-3-beta-ol, which is critical for ergosterol biosynthesis. The C-14 reductase ERG24 reduces the C14=C15 double bond of 4,4-dimethyl-cholesta-8,14,24-trienol to produce 4,4-dimethyl-cholesta-8,24-dienol. 4,4-dimethyl-cholesta-8,24-dienol is substrate of the C-4 demethylation complex ERG25-ERG26-ERG27 in which ERG25 catalyzes the three-step monooxygenation required for the demethylation of 4,4-dimethyl and 4alpha-methylsterols, ERG26 catalyzes the oxidative decarboxylation that results in a reduction of the 3-beta-hydroxy group at the C-3 carbon to an oxo group, and ERG27 is responsible for the reduction of the keto group on the C-3. ERG28 has a role as a scaffold to help anchor ERG25, ERG26 and ERG27 to the endoplasmic reticulum and ERG29 regulates the activity of the iron-containing C4-methylsterol oxidase ERG25. Then, the sterol 24-C-methyltransferase ERG6 catalyzes the methyl transfer from S-adenosyl-methionine to the C-24 of zymosterol to form fecosterol. The C-8 sterol isomerase ERG2 catalyzes the reaction which results in unsaturation at C-7 in the B ring of sterols and thus converts fecosterol to episterol. The sterol-C5-desaturase ERG3 then catalyzes the introduction of a C-5 double bond in the B ring to produce 5-dehydroepisterol. The C-22 sterol desaturase ERG5 further converts 5-dehydroepisterol into ergosta-5,7,22,24(28)-tetraen-3beta-ol by forming the C-22(23) double bond in the sterol side chain. Finally, ergosta-5,7,22,24(28)-tetraen-3beta-ol is substrate of the C-24(28) sterol reductase ERG4 to produce ergosterol. The chain is Sterol 24-C-methyltransferase from Candida albicans (strain SC5314 / ATCC MYA-2876) (Yeast).